Consider the following 193-residue polypeptide: Chlorate reductase assembly chaperone protein (193 aa).

It belongs to the type II DMSO reductase enzyme chaperone family.

Its subcellular location is the cytoplasm. May function as a system-specific chaperone protein essential for the assembly of an active chlorate reductase ClrABC. This is Chlorate reductase assembly chaperone protein (clrD) from Ideonella dechloratans.